Consider the following 585-residue polypeptide: Aspartate--tRNA(Asp/Asn) ligase (585 aa).

E173 serves as a coordination point for L-aspartate. An aspartate region spans residues 197-200; the sequence is QLFK. Position 219 (R219) interacts with L-aspartate. ATP contacts are provided by residues 219–221 and Q228; that span reads RDE. H447 lines the L-aspartate pocket. ATP is bound at residue E477. An L-aspartate-binding site is contributed by R484. ATP is bound at residue 529-532; the sequence is GFDR.

Belongs to the class-II aminoacyl-tRNA synthetase family. Type 1 subfamily. As to quaternary structure, homodimer.

It localises to the cytoplasm. It carries out the reaction tRNA(Asx) + L-aspartate + ATP = L-aspartyl-tRNA(Asx) + AMP + diphosphate. Aspartyl-tRNA synthetase with relaxed tRNA specificity since it is able to aspartylate not only its cognate tRNA(Asp) but also tRNA(Asn). Reaction proceeds in two steps: L-aspartate is first activated by ATP to form Asp-AMP and then transferred to the acceptor end of tRNA(Asp/Asn). The protein is Aspartate--tRNA(Asp/Asn) ligase of Campylobacter concisus (strain 13826).